A 749-amino-acid chain; its full sequence is Disintegrin and metalloproteinase domain-containing protein 10 (749 aa).

Positions 1 to 19 are cleaved as a signal peptide; sequence MVLPTVLILLLSWAAGLGG. The propeptide occupies 20-214; the sequence is QYGNPLNKYI…SGPELLRKKR (195 aa). The Extracellular segment spans residues 20 to 673; sequence QYGNPLNKYI…SPQLYENIAE (654 aa). The Cysteine switch signature appears at 171–178; that stretch reads GGCADHSV. Cys-173 provides a ligand contact to Zn(2+). One can recognise a Peptidase M12B domain in the interval 221–457; that stretch reads NTCQLYIQTD…KRNNCFVESG (237 aa). 17 cysteine pairs are disulfide-bonded: Cys-223–Cys-314, Cys-345–Cys-452, Cys-400–Cys-436, Cys-461–Cys-496, Cys-472–Cys-485, Cys-474–Cys-480, Cys-484–Cys-516, Cys-504–Cys-512, Cys-511–Cys-537, Cys-525–Cys-544, Cys-531–Cys-563, Cys-556–Cys-568, Cys-573–Cys-599, Cys-581–Cys-608, Cys-583–Cys-598, Cys-595–Cys-640, and Cys-633–Cys-646. Residues Asn-268 and Asn-279 are each glycosylated (N-linked (GlcNAc...) asparagine). His-384 contributes to the Zn(2+) binding site. The active site involves Glu-385. Residues His-388 and His-394 each contribute to the Zn(2+) site. Residue Asn-440 is glycosylated (N-linked (GlcNAc...) asparagine). Residues 458–552 enclose the Disintegrin domain; it reads QPICGNGMVE…LCPASDPKPN (95 aa). The N-linked (GlcNAc...) asparagine glycan is linked to Asn-552. The helical transmembrane segment at 674 to 694 threads the bilayer; that stretch reads WIVAHWWAVLLMGIALIMLMA. The Cytoplasmic portion of the chain corresponds to 695-749; sequence GFIKICSVHTPSSNPKLPPPKPLPGTLKRRRPPQPIQQPPRQRPRESYQMGHMRR. Residues 705–749 are disordered; it reads PSSNPKLPPPKPLPGTLKRRRPPQPIQQPPRQRPRESYQMGHMRR. The short motif at 709-716 is the SH3-binding element; that stretch reads PKLPPPKP. Position 720 is a phosphothreonine (Thr-720). The SH3-binding signature appears at 723 to 729; sequence RRRPPQP. Positions 735–749 are interaction with AP2A1, AP2A2 and AP2M1; it reads RQRPRESYQMGHMRR.

Forms a ternary EFNA5-EPHA3-ADAM10 complex mediating EFNA5 extracellular domain shedding by ADAM10 which regulates the EFNA5-EPHA3 complex internalization and function, the cleavage occurs in trans, with ADAM10 and its substrate being on the membranes of opposing cells. Interacts with the clathrin adapter AP2 complex subunits AP2A1, AP2A2, AP2B1, and AP2M1; this interaction facilitates ADAM10 endocytosis from the plasma membrane during long-term potentiation in hippocampal neurons. Forms a ternary complex composed of ADAM10, EPHA4 and CADH1; within the complex, ADAM10 cleaves CADH1 which disrupts adherens junctions. Interacts with EPHA2. Interacts with NGF in a divalent cation-dependent manner. Interacts with TSPAN14; the interaction promotes ADAM10 maturation and cell surface expression. Interacts with TSPAN5, TSPAN10, TSPAN14, TSPAN15, TSPAN17 and TSPAN33; these interactions regulate ADAM10 substrate specificity, endocytosis and turnover. Interacts (via extracellular domain) with TSPAN33 (via extracellular domain) and (via cytoplasmic domain) with AFDN; interaction with TSPAN33 allows the docking of ADAM10 to zonula adherens through a PDZ11-dependent interaction between TSPAN33 and PLEKHA7 while interaction with AFDN locks ADAM10 at zonula adherens. Interacts with DLG1; this interaction recruits ADAM10 to the cell membrane during long-term depression in hippocampal neurons. Interacts (via extracellular domain) with BACE1 (via extracellular domain). Interacts with FAM171A1. Requires Zn(2+) as cofactor. Post-translationally, the precursor is cleaved by furin and PCSK7. Expressed in the brain, specifically in neurons and astrocytes (at protein level). Expressed in inner and outer pillar cells of the organ of Corti (at protein level). Expressed in kidney and lung.

The protein localises to the cell membrane. It is found in the golgi apparatus membrane. The protein resides in the cytoplasmic vesicle. It localises to the clathrin-coated vesicle. Its subcellular location is the cell projection. The protein localises to the axon. It is found in the dendrite. The protein resides in the cell junction. It localises to the adherens junction. Its subcellular location is the cytoplasm. It carries out the reaction Endopeptidase of broad specificity.. Its activity is regulated as follows. Catalytically inactive when the propeptide is intact and associated with the mature enzyme. The disintegrin and cysteine-rich regions modulate access of substrates to exerts an inhibitory effect on the cleavage of ADAM10 substrates. Functionally, transmembrane metalloprotease which mediates the ectodomain shedding of a myriad of transmembrane proteins, including adhesion proteins, growth factor precursors and cytokines being essential for development and tissue homeostasis. Associates with six members of the tetraspanin superfamily TspanC8 which regulate its exit from the endoplasmic reticulum and its substrate selectivity. Cleaves the membrane-bound precursor of TNF-alpha to its mature soluble form. Responsible for the proteolytical release of soluble JAM3 from endothelial cells surface. Responsible for the proteolytic release of several other cell-surface proteins, including heparin-binding epidermal growth-like factor, ephrin-A2, CD44, CDH2 and for constitutive and regulated alpha-secretase cleavage of amyloid precursor protein (APP) at '687-Lys-|-Leu-688'. Contributes to the normal cleavage of the cellular prion protein. Involved in the cleavage of the adhesion molecule L1 at the cell surface and in released membrane vesicles, suggesting a vesicle-based protease activity. Also controls the proteolytic processing of Notch and mediates lateral inhibition during neurogenesis. Required for the development of type 1 transitional B cells into marginal zone B cells, probably by cleaving Notch. Responsible for the FasL ectodomain shedding and for the generation of the remnant ADAM10-processed FasL (FasL APL) transmembrane form. Also cleaves the ectodomain of the integral membrane proteins CORIN and ITM2B. Mediates the proteolytic cleavage of LAG3, leading to release the secreted form of LAG3. Mediates the proteolytic cleavage of IL6R and IL11RA, leading to the release of secreted forms of IL6R and IL11RA. Enhances the cleavage of CHL1 by BACE1. Cleaves NRCAM. Cleaves TREM2, resulting in shedding of the TREM2 ectodomain. Involved in the development and maturation of glomerular and coronary vasculature. During development of the cochlear organ of Corti, promotes pillar cell separation by forming a ternary complex with CADH1 and EPHA4 and cleaving CADH1 at adherens junctions. May regulate the EFNA5-EPHA3 signaling. The protein is Disintegrin and metalloproteinase domain-containing protein 10 (Adam10) of Mus musculus (Mouse).